The following is a 382-amino-acid chain: Beta-lactamase CMY-10 (382 aa).

An N-terminal signal peptide occupies residues 1–23; the sequence is MQQRQSILWGAVATLMWAGLAHA. The Acyl-ester intermediate role is filled by Ser88. An AMP-binding site is contributed by Ser88. GMP-binding residues include Ser88, Gln144, Tyr174, Thr336, Ser338, and Asn363. Residues Ser88, Gln144, Tyr174, Thr336, Ser338, and Asn363 each coordinate IMP. Tyr174 serves as a coordination point for AMP. An AMP-binding site is contributed by Ser338.

Belongs to the class-C beta-lactamase family. As to quaternary structure, monomer.

The catalysed reaction is a beta-lactam + H2O = a substituted beta-amino acid. With respect to regulation, inhibited by various nucleotides in vitro, including adenosine 5'-(P-acetyl)monophosphate (acAMP), inosine-5'-monophosphate (IMP) and guanosine-5'-monophosphate (GMP); IMP and GMP exhibit strongest competitive inhibition. Inhibited by the beta-lactamase-blocking agent, avibactam. Inhibited by clavulanic acid. Weakly inhibited by citric acid. Class C beta-lactamase which confers resistance to penicillins and cephalosporins. Has benzylpenicillin-, ceftazidime-, nitrocefin- and imipenem-hydrolyzing activity. The protein is Beta-lactamase CMY-10 of Klebsiella aerogenes (Enterobacter aerogenes).